Here is a 294-residue protein sequence, read N- to C-terminus: Cytidine deaminase (294 aa).

CMP/dCMP-type deaminase domains lie at 48–168 (DEDA…FGPK) and 186–294 (LTGD…VLLA). 89-91 (NME) lines the substrate pocket. A Zn(2+)-binding site is contributed by histidine 102. The active-site Proton donor is the glutamate 104. Residues cysteine 129 and cysteine 132 each coordinate Zn(2+).

The protein belongs to the cytidine and deoxycytidylate deaminase family. As to quaternary structure, homodimer. Zn(2+) serves as cofactor.

It carries out the reaction cytidine + H2O + H(+) = uridine + NH4(+). The enzyme catalyses 2'-deoxycytidine + H2O + H(+) = 2'-deoxyuridine + NH4(+). Its function is as follows. This enzyme scavenges exogenous and endogenous cytidine and 2'-deoxycytidine for UMP synthesis. The sequence is that of Cytidine deaminase from Escherichia coli O139:H28 (strain E24377A / ETEC).